The chain runs to 183 residues: Gamma-crystallin N (183 aa).

4 consecutive Beta/gamma crystallin 'Greek key' domains span residues 6-46 (GKIT…RVES), 47-89 (GAWV…RPVG), 95-136 (FRID…KVYG), and 138-180 (GAWV…RRVL).

Belongs to the beta/gamma-crystallin family. In terms of assembly, monomer. In terms of tissue distribution, detected in the auditory hindbrain where it is highly expressed in the medial nucleus of the trapezoid body, but also present in other nuclei of the superior olivary complex.

In terms of biological role, crystallins are the dominant structural components of the vertebrate eye lens. Also plays an important role for integrity and function of auditory nuclei. The polypeptide is Gamma-crystallin N (Rattus norvegicus (Rat)).